Consider the following 504-residue polypeptide: Calcium/calmodulin-dependent protein kinase type II (504 aa).

One can recognise a Protein kinase domain in the interval 65–351 (YQLIENLGDG…IHQFFQHPWI (287 aa)). ATP contacts are provided by residues 71–79 (LGDGAFSQV) and Lys-94. Catalysis depends on Asp-188, which acts as the Proton acceptor. Thr-252 bears the Phosphothreonine mark.

This sequence belongs to the protein kinase superfamily. CAMK Ser/Thr protein kinase family. CaMK subfamily. Interacts with sty1. The cofactor is Mg(2+). Post-translationally, autophosphorylated.

The protein resides in the cytoplasm. It localises to the barrier septum. The protein localises to the forespore membrane. It is found in the ascus epiplasm. It carries out the reaction L-seryl-[protein] + ATP = O-phospho-L-seryl-[protein] + ADP + H(+). The catalysed reaction is L-threonyl-[protein] + ATP = O-phospho-L-threonyl-[protein] + ADP + H(+). Its function is as follows. Has a role in the regulation of G2/M transition during the mitotic cell cycle. The protein is Calcium/calmodulin-dependent protein kinase type II of Schizosaccharomyces pombe (strain 972 / ATCC 24843) (Fission yeast).